The chain runs to 151 residues: Methylated-DNA--protein-cysteine methyltransferase (151 aa).

Residue cysteine 119 is the Nucleophile; methyl group acceptor of the active site.

Belongs to the MGMT family.

It localises to the cytoplasm. The enzyme catalyses a 6-O-methyl-2'-deoxyguanosine in DNA + L-cysteinyl-[protein] = S-methyl-L-cysteinyl-[protein] + a 2'-deoxyguanosine in DNA. It carries out the reaction a 4-O-methyl-thymidine in DNA + L-cysteinyl-[protein] = a thymidine in DNA + S-methyl-L-cysteinyl-[protein]. Its function is as follows. Involved in the cellular defense against the biological effects of O6-methylguanine (O6-MeG) and O4-methylthymine (O4-MeT) in DNA. Repairs the methylated nucleobase in DNA by stoichiometrically transferring the methyl group to a cysteine residue in the enzyme. This is a suicide reaction: the enzyme is irreversibly inactivated. This chain is Methylated-DNA--protein-cysteine methyltransferase, found in Saccharolobus islandicus (strain Y.N.15.51 / Yellowstone #2) (Sulfolobus islandicus).